The primary structure comprises 70 residues: Sec-independent protein translocase protein TatA (70 aa).

Residues 1–21 form a helical membrane-spanning segment; the sequence is MGSFSIWHWLIVLVVVLLIFG. A disordered region spans residues 46–70; the sequence is DAPKISESDKGGHTIDAEVKDKQNS.

It belongs to the TatA/E family. The Tat system comprises two distinct complexes: a TatABC complex, containing multiple copies of TatA, TatB and TatC subunits, and a separate TatA complex, containing only TatA subunits. Substrates initially bind to the TatABC complex, which probably triggers association of the separate TatA complex to form the active translocon.

The protein localises to the cell inner membrane. In terms of biological role, part of the twin-arginine translocation (Tat) system that transports large folded proteins containing a characteristic twin-arginine motif in their signal peptide across membranes. TatA could form the protein-conducting channel of the Tat system. The polypeptide is Sec-independent protein translocase protein TatA (Thiobacillus denitrificans (strain ATCC 25259 / T1)).